Here is a 464-residue protein sequence, read N- to C-terminus: ERO1-like protein alpha (464 aa).

The first 23 residues, 1-23, serve as a signal peptide directing secretion; sequence MGRAWGLLVGLLGVVWLLRLGHG. Disulfide bonds link C35–C48, C37–C46, C85–C387, C94–C99, C94–C130, C99–C104, C207–C237, and C390–C393. A phosphoserine mark is found at S106, S142, and S144. FAD-binding residues include R186, T188, and W199. FAD contacts are provided by S248 and H251. N276 is a glycosylation site (N-linked (GlcNAc...) asparagine). The FAD site is built by R283 and R296. A glycan (N-linked (GlcNAc...) asparagine) is linked at N380.

It belongs to the EROs family. Predominantly monomer. May function both as a monomer and a homodimer. Interacts with PDILT. Interacts with ERP44; the interaction results in retention of ERO1A in the endoplasmic reticulum. The cofactor is FAD. Post-translationally, N-glycosylated. The Cys-94/Cys-99 and Cys-390/Cys-393 disulfide bonds constitute the redox-active center. The Cys-94/Cys-99 disulfide bond may accept electron from P4HB and funnel them to the active site disulfide Cys-390/Cys-393. The regulatory Cys-99/Cys-104 disulfide bond stabilizes the other regulatory bond Cys-94/Cys-130. In terms of processing, phosphorylated on Ser-144 by FAM20C in the Golgi which increases its enzymatic activity. Phosphorylation is induced by lactation. It is also induced by hypoxia and reductive stress. In terms of tissue distribution, widely expressed (at protein level). In the mammary gland, expressed at higher levels in lactating mice than in virgin mice (at protein level).

It is found in the endoplasmic reticulum membrane. The protein localises to the golgi apparatus lumen. It localises to the secreted. The protein resides in the cell projection. Its subcellular location is the dendrite. Enzyme activity is tightly regulated to prevent the accumulation of reactive oxygen species in the endoplasmic reticulum. Reversibly down-regulated by the formation of disulfide bonds between the active site Cys-94 and Cys-130, and between Cys-99 and Cys-104. Glutathione may be required to regulate its activity in the endoplasmic reticulum. Oxidoreductase involved in disulfide bond formation in the endoplasmic reticulum. Efficiently reoxidizes P4HB/PDI, the enzyme catalyzing protein disulfide formation, in order to allow P4HB to sustain additional rounds of disulfide formation. Following P4HB reoxidation, passes its electrons to molecular oxygen via FAD, leading to the production of reactive oxygen species (ROS) in the cell. Required for the proper folding of immunoglobulins. Plays an important role in ER stress-induced, CHOP-dependent apoptosis by activating the inositol 1,4,5-trisphosphate receptor IP3R1. The protein is ERO1-like protein alpha of Mus musculus (Mouse).